We begin with the raw amino-acid sequence, 294 residues long: Glycine N-acyltransferase-like protein 2 (294 aa).

K19 carries the N6-acetyllysine modification.

This sequence belongs to the glycine N-acyltransferase family. Acetylation at Lys-19 drastically decreases the production of N-oleoyl and N-arachidonoyl glycines. In terms of tissue distribution, expressed at highest levels in salivary gland and trachea. Also detected in thyroid gland, spinal cord, prostate, lung and fetal brain.

Its subcellular location is the endoplasmic reticulum. The catalysed reaction is an acyl-CoA + glycine = an N-acylglycine + CoA + H(+). The enzyme catalyses (9Z)-hexadecenoyl-CoA + glycine = N-(9Z-hexadecenoyl)-glycine + CoA + H(+). It catalyses the reaction octadecanoyl-CoA + glycine = N-octadecanoylglycine + CoA + H(+). It carries out the reaction (5Z,8Z,11Z,14Z)-eicosatetraenoyl-CoA + glycine = N-(5Z,8Z,11Z,14Z)-eicosatetraenoyl-glycine + CoA + H(+). The catalysed reaction is (9Z)-octadecenoyl-CoA + glycine = N-(9Z-octadecenoyl)glycine + CoA + H(+). The enzyme catalyses octanoyl-CoA + glycine = N-octanoylglycine + CoA + H(+). It catalyses the reaction decanoyl-CoA + glycine = N-decanoylglycine + CoA + H(+). It carries out the reaction tetradecanoyl-CoA + glycine = N-tetradecanoylglycine + CoA + H(+). The catalysed reaction is dodecanoyl-CoA + glycine = N-dodecanoylglycine + CoA + H(+). The enzyme catalyses (9Z,12Z)-octadecadienoyl-CoA + glycine = N-(9Z,12Z-octadecadienoyl)-glycine + CoA + H(+). It catalyses the reaction a fatty acyl-CoA + glycine = an N-(fatty acyl)-glycine + CoA + H(+). In terms of biological role, mitochondrial acyltransferase which transfers the acyl group to the N-terminus of glycine. Conjugates numerous substrates, such as arachidonoyl-CoA and saturated medium and long-chain acyl-CoAs ranging from chain-length C8:0-CoA to C18:0-CoA, to form a variety of N-acylglycines. Shows a preference for monounsaturated fatty acid oleoyl-CoA (C18:1-CoA) as an acyl donor. Does not exhibit any activity toward C22:6-CoA and chenodeoxycholoyl-CoA, nor toward serine or alanine. The polypeptide is Glycine N-acyltransferase-like protein 2 (Homo sapiens (Human)).